The following is a 118-amino-acid chain: MSVNVYDVAYDLEKALRHSEEYSTLKNLYDEVNADESSKRMFENFRDIQVNLQQKQMTGQEITQEEVEQAQKTVALVQQHDKISQLMEAEQRVSVLIGELNKVIMKPLEELYGNPEEN.

This sequence belongs to the UPF0342 family.

In Bacillus pumilus (strain SAFR-032), this protein is UPF0342 protein BPUM_0928.